We begin with the raw amino-acid sequence, 352 residues long: Popeye domain-containing protein 1 (352 aa).

Residues 1–38 (MSNTTSALPSSVPAVSLDPNATLCQDWEQSHHLLFHLA) lie on the Extracellular side of the membrane. N-linked (GlcNAc...) asparagine glycans are attached at residues N3 and N20. The chain crosses the membrane as a helical span at residues 39-59 (NLSLGLGFLIPTTLALHMIFL). A topological domain (cytoplasmic) is located at residue R60. Residues 61–81 (LLLMTGCSLFIAWATLYRCTL) form a helical membrane-spanning segment. A topological domain (extracellular) is located at residue D82. Residues 83–103 (VMVWNVVFLLVNFMHFFFLLY) form a helical membrane-spanning segment. Over 104–352 (KRRPIKIDRE…NVSKTTKKDI (249 aa)) the chain is Cytoplasmic. The segment at 299–352 (ILRGGSTGSSLQKNPLTKTSTTMKPIEEGLEDDVFESESPTTSQNVSKTTKKDI) is disordered. Composition is skewed to polar residues over residues 306 to 321 (GSSLQKNPLTKTSTTM) and 336 to 346 (ESPTTSQNVSK).

This sequence belongs to the popeye family. As to expression, expressed in skeletal muscle (at protein level).

Its subcellular location is the lateral cell membrane. The protein resides in the cell junction. It localises to the tight junction. The protein localises to the membrane. It is found in the cell membrane. Its subcellular location is the sarcolemma. The protein resides in the caveola. Cell adhesion molecule involved in the establishment and/or maintenance of cell integrity. Involved in skeletal muscle and heart development as well as in the maintenance of heart function. May play a role in vamp3-mediated vesicular transport and recycling of receptor molecules. Involved in the formation and regulation of the tight junction (TJ) paracellular permeability barrier in epithelial cells. May induce primordial adhesive contact and aggregation of epithelial cells in a Ca(2+)-independent manner. May be involved in epithelial movement during corneal sheet formation and regeneration. May play a role in the regulation of cell shape and movement by modulating the Rho-GTPase activity. May also be involved in striated muscle regeneration and in the regulation of cell spreading. The polypeptide is Popeye domain-containing protein 1 (popdc1) (Danio rerio (Zebrafish)).